The primary structure comprises 365 residues: Quinone oxidoreductase-like protein 2 homolog (365 aa).

Belongs to the zinc-containing alcohol dehydrogenase family. Quinone oxidoreductase subfamily.

This Nematostella vectensis (Starlet sea anemone) protein is Quinone oxidoreductase-like protein 2 homolog.